We begin with the raw amino-acid sequence, 380 residues long: Cytochrome b (380 aa).

The next 4 membrane-spanning stretches (helical) occupy residues 34–54 (FGSL…LLAM), 78–99 (WLIR…YLHI), 114–134 (WNTG…GYVL), and 179–199 (FFAL…IHLT). 2 residues coordinate heme b: histidine 84 and histidine 98. The heme b site is built by histidine 183 and histidine 197. Residue histidine 202 coordinates a ubiquinone. 4 consecutive transmembrane segments (helical) span residues 227–247 (TKDI…ALFS), 289–309 (LGGV…PLLH), 321–341 (LSQL…WIGS), and 348–368 (FIII…ILFP).

Belongs to the cytochrome b family. As to quaternary structure, the cytochrome bc1 complex contains 11 subunits: 3 respiratory subunits (MT-CYB, CYC1 and UQCRFS1), 2 core proteins (UQCRC1 and UQCRC2) and 6 low-molecular weight proteins (UQCRH/QCR6, UQCRB/QCR7, UQCRQ/QCR8, UQCR10/QCR9, UQCR11/QCR10 and a cleavage product of UQCRFS1). This cytochrome bc1 complex then forms a dimer. It depends on heme b as a cofactor.

The protein localises to the mitochondrion inner membrane. Component of the ubiquinol-cytochrome c reductase complex (complex III or cytochrome b-c1 complex) that is part of the mitochondrial respiratory chain. The b-c1 complex mediates electron transfer from ubiquinol to cytochrome c. Contributes to the generation of a proton gradient across the mitochondrial membrane that is then used for ATP synthesis. The polypeptide is Cytochrome b (MT-CYB) (Pygoscelis antarcticus (Chinstrap penguin)).